The following is a 1629-amino-acid chain: MSTSTLINKAQTNSCGDVGVVDLLKRKVYDDTVKTMQGLDRRAKYRLNQCLGPEQCRTVRGGYPEFQIEFTGASNTSHAMAAGLRGLELEYLYTLVPYGAVSYDIGGNFPAHMMKGRSYVHCCNPALDARDLARNENYRISIENYLSRFEDKSGDYCQWQRKKPKVSKPLPRYQKACFDRYNEDPEHVTCSETFEKCRISPPAERDDIYATSLHSLYDIPYQNLGPALARKRIKVLHAAFHFSEDLLLGASEGLLTQIGGTFQRNGDVLTFSFLDESSLIYTHSFRNVFEYVTRTFFVACNRYAYMKEFRSRRVDTVFCSFIRIDTYCLYRSVFKDCDEHVFAAMDDAWEFKKKRVMLEASRPIFNDVAQFNVYFPNAKDKVCLPIFAVKSVSGAPVTTRHILVEKDFYWTALNHILTYPDGKADFRGVMSFLESIRSRVVINGTTTASQWEVDKSQLKDIALSLLLIAKLEKLKISVIEKRIKIERQGLVSLLKEFLHGLLDEYTQTMAEWVVEKGWVKSVDQVLQVTIPDLVLNFRDHFRCEFRTSANVSEVNVSEHLVATNEYYAKVSDLVDRNPTLAFDFEKFQDYCEKLGVDIDTVTELIDAISTGRAGITLDHTDDKEEQLPRTLAGSSSYLEEEPSDDLVCLSDKAIVNRSTILGELKNNVVIFEGTLPKNSVFVSAPDDPSVTIELSELHARPVSDFLSMQKPVNIVYTGEVQICQMQNYLDYLSASLVACISNLKKYLQDQWLNPGEKFQKIGVWDNLNNKWIVVPQKKKYAWGLAADVDGNQKTVILNYDEHGMPILEKSYVRLVVSTDTYLFTVVSMLGYLRHLDQKKPTATITLVDGVPGCGKTQEILSRFDANSDLILVQGREACEMIRRRANDNVPGSATKENVRTFDSFVMNRKPGKFKTLWVDEGLMVHPGLINFCINISCVSSVYIFGDRKQIPFINRVMNFSIPDNLAKLYYDEIVSRDTTKRCPLDVTHFLNSVYEKRVMSYSNVQRSLECKMISGKAKINDYRSILAEGKLLTFTQEDKEYLLKAGFKDVNTVHEAQGETYRDVNLIRVTATPLTIVSAGSPHVTVALSRHTNRFVYYTVVPDVVMTTVQKTQCVSNFLLDMYAVAYTQKXQLQISPFYTHDIPFVETNKVGQISDLQYFYDSWLPGNSFVQNNHDQWSIISSDINLHSEAVRLDMNKRHIPRTKGEFLRPLLNTAVEPPRIPGLLENLLALIKRNFNAPDLAGQLDYDFLSRKVCDGFFGKLLPPDVEASELLRLPVDHMYSVQNFDDWLNKQEPGVVGQLANWDHIGMPAADQYRHMIKRTPKAKLDLSIQSEYPALQTIVYHSKHVNAVFGPIFSCLTERLLSVVDPLRFKFFTRTTPADLEFFFRDMVVGDMEILELDISKYDKSQNKFHFEVEMRIWEMLGIDKYIEKVWENGHRKTHLRDYTAGIKTVIEYQRKSGDVTTFIGNTIIIAACLCSILPMEKVFKAGFCGDDSIIYLPRNLLYPDIQSVSNNMWNFEAKLFKKLHGYFCGRYXLRNGRYLRLLPDPLKIITKLGCKAIKDWDHLEEFRISMFDMACEYKNCFGFDVLESAVKESFPKAEGCNVAFCAIYKFLSNKYLFRTLFSDV.

Residues 48–473 form a methyltransferase region; that stretch reads NQCLGPEQCR…SLLLIAKLEK (426 aa). One can recognise an Alphavirus-like MT domain in the interval 69 to 292; that stretch reads EFTGASNTSH…HSFRNVFEYV (224 aa). Positions 821–976 constitute a (+)RNA virus helicase ATP-binding domain; sequence YLFTVVSMLG…KLYYDEIVSR (156 aa). Residues 845-1099 are helicase; sequence TLVDGVPGCG…RHTNRFVYYT (255 aa). Residue 849-856 coordinates ATP; that stretch reads GVPGCGKT. One can recognise a (+)RNA virus helicase C-terminal domain in the interval 977–1130; it reads DTTKRCPLDV…DMYAVAYTQK (154 aa). A RdRp catalytic domain is found at 1396 to 1509; sequence MEILELDISK…YLPRNLLYPD (114 aa).

Belongs to the ssRNA positive-strand viruses RNA-directed RNA polymerase family. Heterodimer of a large and a small subunit.

The catalysed reaction is RNA(n) + a ribonucleoside 5'-triphosphate = RNA(n+1) + diphosphate. It carries out the reaction ATP + H2O = ADP + phosphate + H(+). Is an RNA-dependent RNA polymerase active in viral RNA replication. In terms of biological role, is a methyltransferase active in RNA capping and an RNA helicase. Methyltransferase displays a cytoplasmic capping enzyme activity. This function is necessary since all viral RNAs are synthesized in the cytoplasm, and host capping enzymes are restricted to the nucleus. Helicase region probably exhibits NTPase and RNA unwinding activities (Potential). It also acts as a suppressor of RNA-mediated gene silencing, also known as post-transcriptional gene silencing (PTGS), a mechanism of plant viral defense that limits the accumulation of viral RNAs. May mediate silencing suppression through either inhibition of HEN1-mediated siRNA or siRNA demethylation. The protein is Replicase large subunit of Crotalaria juncea (Sunn hemp).